Reading from the N-terminus, the 396-residue chain is 8-amino-7-oxononanoate synthase (396 aa).

Arginine 19 is a binding site for substrate. Residue 106-107 coordinates pyridoxal 5'-phosphate; it reads GY. Residue histidine 131 coordinates substrate. Pyridoxal 5'-phosphate contacts are provided by serine 176, histidine 204, and threonine 233. N6-(pyridoxal phosphate)lysine is present on lysine 236. Threonine 350 is a substrate binding site.

It belongs to the class-II pyridoxal-phosphate-dependent aminotransferase family. BioF subfamily. In terms of assembly, homodimer. The cofactor is pyridoxal 5'-phosphate.

The enzyme catalyses 6-carboxyhexanoyl-[ACP] + L-alanine + H(+) = (8S)-8-amino-7-oxononanoate + holo-[ACP] + CO2. It participates in cofactor biosynthesis; biotin biosynthesis. Catalyzes the decarboxylative condensation of pimeloyl-[acyl-carrier protein] and L-alanine to produce 8-amino-7-oxononanoate (AON), [acyl-carrier protein], and carbon dioxide. The sequence is that of 8-amino-7-oxononanoate synthase from Pseudomonas savastanoi pv. phaseolicola (strain 1448A / Race 6) (Pseudomonas syringae pv. phaseolicola (strain 1448A / Race 6)).